Reading from the N-terminus, the 695-residue chain is Elongation factor G 2 (695 aa).

A tr-type G domain is found at 5 to 280 (SKYRNIGIFA…AVVDYLPSPT (276 aa)). GTP is bound by residues 14–21 (AHVDAGKT), 78–82 (DTPGH), and 132–135 (NKLD).

The protein belongs to the TRAFAC class translation factor GTPase superfamily. Classic translation factor GTPase family. EF-G/EF-2 subfamily.

The protein resides in the cytoplasm. Catalyzes the GTP-dependent ribosomal translocation step during translation elongation. During this step, the ribosome changes from the pre-translocational (PRE) to the post-translocational (POST) state as the newly formed A-site-bound peptidyl-tRNA and P-site-bound deacylated tRNA move to the P and E sites, respectively. Catalyzes the coordinated movement of the two tRNA molecules, the mRNA and conformational changes in the ribosome. The sequence is that of Elongation factor G 2 from Vibrio vulnificus (strain YJ016).